We begin with the raw amino-acid sequence, 512 residues long: MHAKRPSVLFFTISDFGYVNVVLATIYELLLRDEVDIHIASFAPLKPRLESLVQLVKHETKKSTDSSPGVHFHNLADFPGFATWAAQSKDRKKADVPHPPGRNGAGRVALLTLKALAIMEPEQYLSLFDWSADLTRKLNPALVMVDPILLPCHDMARTLGRKYAVLHPWSVADGLIPRQGWWSEYWKYPAFSTGFPYPLPWGKIPENISCYLTSKQCHSHPKVQALNQARYSHGIKPDPLGSFTPFAEGVPQITPSLPAVDLPMGNIPKNVFDCGPILVASPPIETSDPDLLSWLRRAPTVLVSLGTHFEAYAETVREQAIGIRILLEARPDVQVLWKLKREATSEKSGQENLESILGQAIQDGRVRTESWLKADPVAILRSGHIVCSVHHGGANSYFEATWAGVPQIVLAMWYDTFDYATRVEYLGIGAYGNREKGRSCVVDEDNYVAPNLVDGEEFGAALLRVVGRNRADPGAAQITKSAVILGEVCRRSGGRVRSAEIVTGLCFGKLDY.

A signal peptide spans methionine 1–alanine 24. An N-linked (GlcNAc...) asparagine glycan is attached at asparagine 207.

The protein belongs to the UDP-glycosyltransferase family.

The enzyme catalyses sordaricin + GDP-6-deoxy-alpha-D-altrose = 4'-O-demethylsordarin + GDP + H(+). The protein operates within antibiotic biosynthesis. Functionally, glycosyltransferase; part of the gene cluster that mediates the biosynthesis of sordarin and hypoxysordarin, glycoside antibiotics with a unique tetracyclic diterpene aglycone structure. First, the geranylgeranyl diphosphate synthase sdnC constructs GGDP from farnesyl diphosphate and isopentenyl diphosphate. The diterpene cyclase sdnA then catalyzes the cyclization of GGDP to afford cycloaraneosene. Cycloaraneosene is then hydroxylated four times by the putative cytochrome P450 monooxygenases sdnB, sdnE, sdnF and sdnH to give a hydroxylated cycloaraneosene derivative such as cycloaraneosene-8,9,13,19-tetraol. Although the order of the hydroxylations is unclear, at least C8, C9 and C13 of the cycloaraneosene skeleton are hydroxylated before the sordaricin formation. Dehydration of the 13-hydroxy group of the hydroxylated cycloaraneosene derivative might be catalyzed by an unassigned hypothetical protein such as sdnG and sdnP to construct the cyclopentadiene moiety. The FAD-dependent oxidoreductase sdnN is proposed to catalyze the oxidation at C9 of the hydroxylated cycloaraneosene derivative and also catalyze the Baeyer-Villiger oxidation to give the lactone intermediate. The presumed lactone intermediate would be hydrolyzed to give an acrolein moiety and a carboxylate moiety. Then, [4+2]cycloaddition would occur between the acrolein moiety and the cyclopentadiene moiety to give sordaricin. SdnN might also be involved in the [4+2]cycloaddition after the hypothesized oxidation to accommodate the oxidized product and prompt the [4+2]cycloaddition. GDP-6-deoxy-D-altrose may be biosynthesized from GDP-D-mannose by the putative GDP-mannose-4,6-dehydratase sdnI and the short-chain dehydrogenase sdnK. The glycosyltransferase sdnJ catalyzes the attachment of 6-deoxy-D-altrose onto the 19-hydroxy group of sordaricin to give 4'-O-demethylsordarin. The methyltransferase sdnD would complete the biosynthesis of sordarin. Sordarin can be further modified into hypoxysordarin. The unique acyl chain at the 3'-hydroxy group of hypoxysordarin would be constructed by an iterative type I PKS sdnO and the trans-acting polyketide methyltransferase sdnL. SdnL would be responsible for the introduction of an alpha-methyl group of the polyketide chain. Alternatively, the beta-lactamase-like protein sdnR might be responsible for the cleavage and transfer of the polyketide chain from the PKS sdnO to sordarin. Two putative cytochrome P450 monooxygenases, sdnQ and sdnT, might catalyze the epoxidations of the polyketide chain to complete the biosynthesis of hypoxysordarin. Transcriptional regulators sdnM and sdnS are presumably encoded for the transcriptional regulation of the expression of the sdn gene cluster. The protein is Glycosyltransferase sdnJ of Sordaria araneosa (Pleurage araneosa).